The following is a 359-amino-acid chain: Phospho-N-acetylmuramoyl-pentapeptide-transferase (359 aa).

Helical transmembrane passes span 27-47, 70-90, 97-117, 133-153, 167-187, 198-218, 238-258, 261-281, 287-307, and 336-356; these read GAFFTALIFGFIFGQPLINAL, TPTMGGLLILAALSLATLLWA, VWLVLGVTWCFGLIGFADDWA, LAIGFVVAFGAALIAAWVHPE, VLLNMGWMYVPFVMIVIVGSA, GLAIMPVMIAAGTLGVIAYAV, LLIFTAGLIGGGLGFLWYNAP, AVFMGDTGSLALGGALGAIAV, IVLAIVGGLFVAEAVSVIVQV, and QVVIRFWIISLILALIGLATL.

Belongs to the glycosyltransferase 4 family. MraY subfamily. The cofactor is Mg(2+).

The protein resides in the cell inner membrane. The enzyme catalyses UDP-N-acetyl-alpha-D-muramoyl-L-alanyl-gamma-D-glutamyl-meso-2,6-diaminopimeloyl-D-alanyl-D-alanine + di-trans,octa-cis-undecaprenyl phosphate = di-trans,octa-cis-undecaprenyl diphospho-N-acetyl-alpha-D-muramoyl-L-alanyl-D-glutamyl-meso-2,6-diaminopimeloyl-D-alanyl-D-alanine + UMP. Its pathway is cell wall biogenesis; peptidoglycan biosynthesis. In terms of biological role, catalyzes the initial step of the lipid cycle reactions in the biosynthesis of the cell wall peptidoglycan: transfers peptidoglycan precursor phospho-MurNAc-pentapeptide from UDP-MurNAc-pentapeptide onto the lipid carrier undecaprenyl phosphate, yielding undecaprenyl-pyrophosphoryl-MurNAc-pentapeptide, known as lipid I. The polypeptide is Phospho-N-acetylmuramoyl-pentapeptide-transferase (Jannaschia sp. (strain CCS1)).